The chain runs to 246 residues: UDP-N-acetyl-D-mannosaminuronic acid transferase (246 aa).

The protein belongs to the glycosyltransferase 26 family.

The catalysed reaction is UDP-N-acetyl-alpha-D-mannosaminouronate + N-acetyl-alpha-D-glucosaminyl-di-trans,octa-cis-undecaprenyl diphosphate = beta-D-ManNAcA-(1-&gt;4)-alpha-D-GlcNAc-di-trans,octa-cis-undecaprenyl diphosphate + UDP + H(+). It functions in the pathway bacterial outer membrane biogenesis; enterobacterial common antigen biosynthesis. Functionally, catalyzes the synthesis of Und-PP-GlcNAc-ManNAcA (Lipid II), the second lipid-linked intermediate involved in enterobacterial common antigen (ECA) synthesis. The sequence is that of UDP-N-acetyl-D-mannosaminuronic acid transferase from Salmonella arizonae (strain ATCC BAA-731 / CDC346-86 / RSK2980).